Here is a 96-residue protein sequence, read N- to C-terminus: Cobalt transport protein CbiN (96 aa).

The next 2 membrane-spanning stretches (helical) occupy residues 4 to 24 and 59 to 79; these read WLAA…VSAG and IESL…GYYL.

It belongs to the CbiN family. As to quaternary structure, forms an energy-coupling factor (ECF) transporter complex composed of an ATP-binding protein (A component, CbiO), a transmembrane protein (T component, CbiQ) and 2 possible substrate-capture proteins (S components, CbiM and CbiN) of unknown stoichimetry.

The protein localises to the cell membrane. It participates in cofactor biosynthesis; adenosylcobalamin biosynthesis. Part of the energy-coupling factor (ECF) transporter complex CbiMNOQ involved in cobalt import. This is Cobalt transport protein CbiN from Halobacterium salinarum (strain ATCC 29341 / DSM 671 / R1).